The chain runs to 216 residues: DDB1- and CUL4-associated factor 16 (216 aa).

Positions Met-1–Met-42 are disordered. The span at Ser-29 to Ser-41 shows a compositional bias: acidic residues. Lys-61 is modified (N6-acetyllysine).

In terms of assembly, interacts with DDB1 and CUL4A.

It localises to the nucleus. Its pathway is protein modification; protein ubiquitination. Its function is as follows. Functions as a substrate recognition component for CUL4-DDB1 E3 ubiquitin-protein ligase complex, which mediates ubiquitination and proteasome-dependent degradation of nuclear proteins. The polypeptide is DDB1- and CUL4-associated factor 16 (Homo sapiens (Human)).